We begin with the raw amino-acid sequence, 1121 residues long: Peroxisomal ATPase PEX1 (1121 aa).

Disordered stretches follow at residues S187 to E221 and S1099 to M1121. Low complexity predominate over residues S205–T217.

Belongs to the AAA ATPase family. In terms of assembly, interacts with PEX6; forming the PEX1-PEX6 AAA ATPase complex, which is composed of a heterohexamer formed by a trimer of PEX1-PEX6 dimers.

Its subcellular location is the membrane. The catalysed reaction is ATP + H2O = ADP + phosphate + H(+). Component of the PEX1-PEX6 AAA ATPase complex involved in peroxisome biosynthesis. The complex acts as a protein dislocase complex that mediates the ATP-dependent extraction of the PEX5 receptor from peroxisomal membranes, an essential step for PEX5 recycling. Specifically recognizes PEX5 monoubiquitinated at 'Cys-6', and pulls it out of the peroxisome lumen through the PEX2-PEX10-PEX12 retrotranslocation channel. Extraction by the PEX1-PEX6 AAA ATPase complex is accompanied by unfolding of the TPR repeats and release of bound cargo from PEX5. The polypeptide is Peroxisomal ATPase PEX1 (Komagataella phaffii (strain GS115 / ATCC 20864) (Yeast)).